Here is a 740-residue protein sequence, read N- to C-terminus: Ribosomal protein S6 kinase alpha-3 (740 aa).

The segment at 1–38 is disordered; the sequence is MPLAQLADPWQKMAVESPSDSAENGQQIMDEPMGEEEI. Positions 18 to 27 are enriched in polar residues; that stretch reads PSDSAENGQQ. One can recognise a Protein kinase 1 domain in the interval 68–327; the sequence is FELLKVLGQG…VEEIKRHSFF (260 aa). Residues 74-82 and Lys100 each bind ATP; that span reads LGQGSFGKV. The Proton acceptor role is filled by Asp193. Ser227 carries the phosphoserine; by PDPK1 modification. Residues 328–397 form the AGC-kinase C-terminal domain; that stretch reads STIDWNKLYR…VAITSDDESQ (70 aa). Phosphothreonine is present on Thr365. Ser369 and Ser375 each carry phosphoserine. Phosphoserine; by autocatalysis and MAPKAPK2 is present on Ser386. Ser415 is modified (phosphoserine). The 258-residue stretch at 422-679 folds into the Protein kinase 2 domain; it reads YEVKEDIGVG…AALVLRHPWI (258 aa). Residues 428 to 436 and Lys451 each bind ATP; that span reads IGVGSYSVC. Tyr529 is modified (phosphotyrosine; by FGFR3). Asp539 acts as the Proton acceptor in catalysis. Phosphoserine occurs at positions 556 and 715.

It belongs to the protein kinase superfamily. AGC Ser/Thr protein kinase family. S6 kinase subfamily. As to quaternary structure, forms a complex with either MAPK1/ERK2 or MAPK3/ERK1 in quiescent cells. Transiently dissociates following mitogenic stimulation. Interacts with NFATC4, ETV1/ER81 and FGFR1. Requires Mg(2+) as cofactor. In terms of processing, activated by phosphorylation at Ser-227 by PDPK1. Autophosphorylated on Ser-386, as part of the activation process. May be phosphorylated at Thr-365 and Ser-369 by MAPK1/ERK2 and MAPK3/ERK1. Can also be activated via phosphorylation at Ser-386 by MAPKAPK2. Post-translationally, N-terminal myristoylation results in an activated kinase in the absence of added growth factors. As to expression, expressed in many tissues, highest levels in skeletal muscle.

The protein localises to the nucleus. The protein resides in the cytoplasm. The catalysed reaction is L-seryl-[protein] + ATP = O-phospho-L-seryl-[protein] + ADP + H(+). It catalyses the reaction L-threonyl-[protein] + ATP = O-phospho-L-threonyl-[protein] + ADP + H(+). Upon extracellular signal or mitogen stimulation, phosphorylated at Thr-577 in the C-terminal kinase domain (CTKD) by MAPK1/ERK2 and MAPK3/ERK1. The activated CTKD then autophosphorylates Ser-386, allowing binding of PDPK1, which in turn phosphorylates Ser-227 in the N-terminal kinase domain (NTDK) leading to the full activation of the protein and subsequent phosphorylation of the substrates by the NTKD. Serine/threonine-protein kinase that acts downstream of ERK (MAPK1/ERK2 and MAPK3/ERK1) signaling and mediates mitogenic and stress-induced activation of the transcription factors CREB1, ETV1/ER81 and NR4A1/NUR77, regulates translation through RPS6 and EIF4B phosphorylation, and mediates cellular proliferation, survival, and differentiation by modulating mTOR signaling and repressing pro-apoptotic function of BAD and DAPK1. In fibroblast, is required for EGF-stimulated phosphorylation of CREB1 and histone H3 at 'Ser-10', which results in the subsequent transcriptional activation of several immediate-early genes. In response to mitogenic stimulation (EGF and PMA), phosphorylates and activates NR4A1/NUR77 and ETV1/ER81 transcription factors and the cofactor CREBBP. Upon insulin-derived signal, acts indirectly on the transcription regulation of several genes by phosphorylating GSK3B at 'Ser-9' and inhibiting its activity. Phosphorylates RPS6 in response to serum or EGF via an mTOR-independent mechanism and promotes translation initiation by facilitating assembly of the preinitiation complex. In response to insulin, phosphorylates EIF4B, enhancing EIF4B affinity for the EIF3 complex and stimulating cap-dependent translation. Is involved in the mTOR nutrient-sensing pathway by directly phosphorylating TSC2 at 'Ser-1798', which potently inhibits TSC2 ability to suppress mTOR signaling, and mediates phosphorylation of RPTOR, which regulates mTORC1 activity and may promote rapamycin-sensitive signaling independently of the PI3K/AKT pathway. Mediates cell survival by phosphorylating the pro-apoptotic proteins BAD and DAPK1 and suppressing their pro-apoptotic function. Promotes the survival of hepatic stellate cells by phosphorylating CEBPB in response to the hepatotoxin carbon tetrachloride (CCl4). Is involved in cell cycle regulation by phosphorylating the CDK inhibitor CDKN1B, which promotes CDKN1B association with 14-3-3 proteins and prevents its translocation to the nucleus and inhibition of G1 progression. In LPS-stimulated dendritic cells, is involved in TLR4-induced macropinocytosis, and in myeloma cells, acts as effector of FGFR3-mediated transformation signaling, after direct phosphorylation at Tyr-529 by FGFR3. Negatively regulates EGF-induced MAPK1/3 phosphorylation via phosphorylation of SOS1. Phosphorylates SOS1 at 'Ser-1134' and 'Ser-1161' that create YWHAB and YWHAE binding sites and which contribute to the negative regulation of MAPK1/3 phosphorylation. Phosphorylates EPHA2 at 'Ser-897', the RPS6KA-EPHA2 signaling pathway controls cell migration. Acts as a regulator of osteoblast differentiation by mediating phosphorylation of ATF4, thereby promoting ATF4 transactivation activity. This chain is Ribosomal protein S6 kinase alpha-3 (RPS6KA3), found in Homo sapiens (Human).